Reading from the N-terminus, the 216-residue chain is Cobalt-zinc-cadmium resistance protein CzcN (216 aa).

3 helical membrane-spanning segments follow: residues 27–47 (IGVW…GHSR), 50–70 (GTWV…LATV), and 116–136 (ESLA…PAVI).

To A.xylosoxydans NccN.

The protein resides in the cell inner membrane. Component of the CZC cation-efflux system that confers resistance to cobalt, zinc and cadmium. This is Cobalt-zinc-cadmium resistance protein CzcN (czcN) from Cupriavidus metallidurans (strain ATCC 43123 / DSM 2839 / NBRC 102507 / CH34) (Ralstonia metallidurans).